The primary structure comprises 96 residues: MGSKIFLLLGLSIAFALLISSEVAARDLSETTTEGASLDGGHHGGGGGGHYSGGGGHGGSHHGGGGHGGCHHYCHGSCCSAAEAKALEAAQVKPQN.

Residues 1-25 form the signal peptide; that stretch reads MGSKIFLLLGLSIAFALLISSEVAA. Residues 29–66 are disordered; it reads SETTTEGASLDGGHHGGGGGGHYSGGGGHGGSHHGGGG. 2 tandem repeats follow at residues 42-50 and 61-67. A 2 approximate repeats of H-H-G(4,6)-H region spans residues 42-67; the sequence is HHGGGGGGHYSGGGGHGGSHHGGGGH. The segment covering 43–66 has biased composition (gly residues); the sequence is HGGGGGGHYSGGGGHGGSHHGGGG.

It belongs to the GRP family.

May be connected with the initiation of embryogenesis or with the metabolic changes produced by the removal of auxins. The protein is Glycine-rich protein DC7.1 of Daucus carota (Wild carrot).